A 341-amino-acid polypeptide reads, in one-letter code: MTGGVPSLGFACQPDAAEALERWGRWLEHERGASTHTLRSYRADLAGFLAFVAEHRGRPPGLNDLGALDLGAFRAWLAARAADGAGAATRSRGVSGVRSFFRWADRSGLLHNPAIALLTAPKAQRPLPRPLAADDAALLLEEAAAVPEAPWIGLRDRALFTLLYGCGLRISEAIGLNRSDLPAGAASVRVLGKGGKQRDVPVLPAVREAVAAYLAAVPWGGGRAAPLFVGAKGDRLSPDVARRQMRHLRALLGLPDSTTPHALRHSFATHLLGGGADLRAIQDLLGHASLSTTQRYTDVDAEHLLSVYETAHPRARRQGHQTVRSVCDALPPRLRNQESER.

The 92-residue stretch at 14-105 (PDAAEALERW…GVRSFFRWAD (92 aa)) folds into the Core-binding (CB) domain. Residues 126 to 309 (PLPRPLAADD…DAEHLLSVYE (184 aa)) enclose the Tyr recombinase domain. Residues Arg169, Lys193, His261, Arg264, and His287 contribute to the active site. The active-site O-(3'-phospho-DNA)-tyrosine intermediate is Tyr296.

It belongs to the 'phage' integrase family. XerC subfamily. As to quaternary structure, forms a cyclic heterotetrameric complex composed of two molecules of XerC and two molecules of XerD.

It localises to the cytoplasm. Its function is as follows. Site-specific tyrosine recombinase, which acts by catalyzing the cutting and rejoining of the recombining DNA molecules. The XerC-XerD complex is essential to convert dimers of the bacterial chromosome into monomers to permit their segregation at cell division. It also contributes to the segregational stability of plasmids. The polypeptide is Tyrosine recombinase XerC (Rhodospirillum centenum (strain ATCC 51521 / SW)).